The following is a 335-amino-acid chain: Luciferase-like monooxygenase (335 aa).

This sequence to bacterial alkanal monooxygenase alpha and beta chains.

This Escherichia coli O6:H1 (strain CFT073 / ATCC 700928 / UPEC) protein is Luciferase-like monooxygenase (yhbW).